The sequence spans 64 residues: Temporin-ALf (64 aa).

The signal sequence occupies residues 1–22 (MFTLKKSLLLLFFLGTINLSLC). Residues 23-46 (EQERNAEEERRDEPDERNAEVEKR) constitute a propeptide that is removed on maturation. Residue Leu-62 is modified to Leucine amide.

In terms of tissue distribution, expressed by the skin glands.

The protein resides in the secreted. Its function is as follows. Antimicrobial peptide with activity against Gram-positive and Gram-negative bacteria and against fungi. Has been tested against S.aureus (MIC=2.5 ug/mL), B.pumilus (MIC=5.0 ug/mL), B.cereus (MIC=30.0 ug/mL), E.coli (MIC=2.5 ug/mL), B.dysenteriae (MIC=5.0 ug/mL), A.cacoaceticus (MIC=30.0 ug/mL), P.aeruginosa (MIC=5.0 ug/mL) and C.albicans (MIC=2.5 ug/mL). Also shows a weak hemolytic activity. This is Temporin-ALf from Amolops loloensis (Lolokou Sucker Frog).